Reading from the N-terminus, the 210-residue chain is MELSVLQYTGKDTGRKVVLSDTIFGITPNDHAIYLDVKNILANKRQGTHKSKERGEIAGSTKKIKKQKGTGTARAGSIKSPIFRGGGRVFGPKPRDYGFKLNKKLKKLARKSALTYKAQQGNISVLEDFSFEMPKTKMYLEMLQNLNMADQKTLLILPAVDKNLVLASRNLPNTSVALVEQINTYDLLYSKKILISETALSKLTENFNNA.

A disordered region spans residues 46–77 (QGTHKSKERGEIAGSTKKIKKQKGTGTARAGS).

The protein belongs to the universal ribosomal protein uL4 family. As to quaternary structure, part of the 50S ribosomal subunit.

Functionally, one of the primary rRNA binding proteins, this protein initially binds near the 5'-end of the 23S rRNA. It is important during the early stages of 50S assembly. It makes multiple contacts with different domains of the 23S rRNA in the assembled 50S subunit and ribosome. Its function is as follows. Forms part of the polypeptide exit tunnel. The chain is Large ribosomal subunit protein uL4 from Amoebophilus asiaticus (strain 5a2).